Reading from the N-terminus, the 646-residue chain is Nucleoside triphosphatase I (646 aa).

One can recognise a Helicase ATP-binding domain in the interval 48–213 (FIGLKNLNSM…NNLIGLLRPN (166 aa)). 61-68 (WDTGMGKT) contributes to the ATP binding site. The DEXH box signature appears at 151–154 (DEVH). One can recognise a Helicase C-terminal domain in the interval 377 to 540 (YIEACRIILN…KINVVFDLLK (164 aa)). Residues 466–532 (DIIILDMPWN…DIIKDKQSKI (67 aa)) are binding to the cap-specific mRNA (nucleoside-2'-O-)-methyltransferase.

It belongs to the helicase family. NPH I subfamily. Monomer. Interacts (via C-terminus) with RAP94 (via N-terminus). Interacts with the cap-specific mRNA (nucleoside-2'-O-)-methyltransferase.

The protein resides in the virion. It carries out the reaction a ribonucleoside 5'-triphosphate + H2O = a ribonucleoside 5'-diphosphate + phosphate + H(+). Its function is as follows. DNA-dependent ATPase required for providing the needed energy to achieve the termination of early transcripts. Acts in concert with the RAP94 subunit of the virion RNA polymerase and the capping enzyme/VTF to catalyze release of UUUUUNU-containing nascent RNA from the elongation complex. NPH-I must bind ssDNA in order to exhibit ATPase activity. The chain is Nucleoside triphosphatase I (NPH1) from Heliothis armigera entomopoxvirus (HaEPV).